Here is a 155-residue protein sequence, read N- to C-terminus: 17.6 kDa class I heat shock protein 1 (155 aa).

The region spanning 39–154 is the sHSP domain; the sequence is SSSAIANARV…KAQVKSIDIS (116 aa).

The protein belongs to the small heat shock protein (HSP20) family. As to quaternary structure, forms oligomeric structures. Binds to AKR2A.

It localises to the cytoplasm. Possesses chaperone activity. This Arabidopsis thaliana (Mouse-ear cress) protein is 17.6 kDa class I heat shock protein 1 (HSP17.6A).